The chain runs to 691 residues: Elongation factor G (691 aa).

Residues 8–283 form the tr-type G domain; the sequence is EDYRNFGIMA…AVVDYLPSPI (276 aa). GTP contacts are provided by residues 17-24, 81-85, and 135-138; these read AHIDAGKT, DTPGH, and NKMD.

The protein belongs to the TRAFAC class translation factor GTPase superfamily. Classic translation factor GTPase family. EF-G/EF-2 subfamily.

Its subcellular location is the cytoplasm. Catalyzes the GTP-dependent ribosomal translocation step during translation elongation. During this step, the ribosome changes from the pre-translocational (PRE) to the post-translocational (POST) state as the newly formed A-site-bound peptidyl-tRNA and P-site-bound deacylated tRNA move to the P and E sites, respectively. Catalyzes the coordinated movement of the two tRNA molecules, the mRNA and conformational changes in the ribosome. This chain is Elongation factor G, found in Methylocella silvestris (strain DSM 15510 / CIP 108128 / LMG 27833 / NCIMB 13906 / BL2).